We begin with the raw amino-acid sequence, 393 residues long: Acetylornithine aminotransferase (393 aa).

Pyridoxal 5'-phosphate-binding positions include 100-101 and Phe132; that span reads GT. Arg135 is a N(2)-acetyl-L-ornithine binding site. 217–220 serves as a coordination point for pyridoxal 5'-phosphate; sequence DEIQ. Position 246 is an N6-(pyridoxal phosphate)lysine (Lys246). Ser275 is a binding site for N(2)-acetyl-L-ornithine. Residue Thr276 coordinates pyridoxal 5'-phosphate.

The protein belongs to the class-III pyridoxal-phosphate-dependent aminotransferase family. ArgD subfamily. As to quaternary structure, homodimer. Pyridoxal 5'-phosphate is required as a cofactor.

It localises to the cytoplasm. The enzyme catalyses N(2)-acetyl-L-ornithine + 2-oxoglutarate = N-acetyl-L-glutamate 5-semialdehyde + L-glutamate. The protein operates within amino-acid biosynthesis; L-arginine biosynthesis; N(2)-acetyl-L-ornithine from L-glutamate: step 4/4. The polypeptide is Acetylornithine aminotransferase (Campylobacter jejuni subsp. jejuni serotype O:2 (strain ATCC 700819 / NCTC 11168)).